The chain runs to 946 residues: Bifunctional glutamine synthetase adenylyltransferase/adenylyl-removing enzyme (946 aa).

Residues 1 to 440 (MKPLSSPLQQ…VFNELIGDDE (440 aa)) are adenylyl removase. The adenylyl transferase stretch occupies residues 449–946 (SEHWRELWQD…ASWQKWLVAG (498 aa)).

The protein belongs to the GlnE family. Mg(2+) serves as cofactor.

The enzyme catalyses [glutamine synthetase]-O(4)-(5'-adenylyl)-L-tyrosine + phosphate = [glutamine synthetase]-L-tyrosine + ADP. It carries out the reaction [glutamine synthetase]-L-tyrosine + ATP = [glutamine synthetase]-O(4)-(5'-adenylyl)-L-tyrosine + diphosphate. In terms of biological role, involved in the regulation of glutamine synthetase GlnA, a key enzyme in the process to assimilate ammonia. When cellular nitrogen levels are high, the C-terminal adenylyl transferase (AT) inactivates GlnA by covalent transfer of an adenylyl group from ATP to specific tyrosine residue of GlnA, thus reducing its activity. Conversely, when nitrogen levels are low, the N-terminal adenylyl removase (AR) activates GlnA by removing the adenylyl group by phosphorolysis, increasing its activity. The regulatory region of GlnE binds the signal transduction protein PII (GlnB) which indicates the nitrogen status of the cell. The sequence is that of Bifunctional glutamine synthetase adenylyltransferase/adenylyl-removing enzyme from Citrobacter koseri (strain ATCC BAA-895 / CDC 4225-83 / SGSC4696).